The primary structure comprises 220 residues: Deoxyribose-phosphate aldolase (220 aa).

Residue D89 is the Proton donor/acceptor of the active site. Residue K151 is the Schiff-base intermediate with acetaldehyde of the active site. The Proton donor/acceptor role is filled by K180.

This sequence belongs to the DeoC/FbaB aldolase family. DeoC type 1 subfamily.

It localises to the cytoplasm. It carries out the reaction 2-deoxy-D-ribose 5-phosphate = D-glyceraldehyde 3-phosphate + acetaldehyde. It participates in carbohydrate degradation; 2-deoxy-D-ribose 1-phosphate degradation; D-glyceraldehyde 3-phosphate and acetaldehyde from 2-deoxy-alpha-D-ribose 1-phosphate: step 2/2. Functionally, catalyzes a reversible aldol reaction between acetaldehyde and D-glyceraldehyde 3-phosphate to generate 2-deoxy-D-ribose 5-phosphate. The polypeptide is Deoxyribose-phosphate aldolase (Staphylococcus epidermidis (strain ATCC 12228 / FDA PCI 1200)).